A 316-amino-acid polypeptide reads, in one-letter code: tRNA dimethylallyltransferase (316 aa).

17 to 24 (GPTASGKT) is an ATP binding site. Position 19-24 (19-24 (TASGKT)) interacts with substrate. Interaction with substrate tRNA stretches follow at residues 42-45 (DSAL), 166-170 (QRLSR), and 247-252 (RCVGYR).

It belongs to the IPP transferase family. As to quaternary structure, monomer. Mg(2+) serves as cofactor.

The enzyme catalyses adenosine(37) in tRNA + dimethylallyl diphosphate = N(6)-dimethylallyladenosine(37) in tRNA + diphosphate. In terms of biological role, catalyzes the transfer of a dimethylallyl group onto the adenine at position 37 in tRNAs that read codons beginning with uridine, leading to the formation of N6-(dimethylallyl)adenosine (i(6)A). This chain is tRNA dimethylallyltransferase, found in Salmonella arizonae (strain ATCC BAA-731 / CDC346-86 / RSK2980).